The primary structure comprises 281 residues: Bifunctional protein FolD (281 aa).

Residues 165–167, Thr192, and Val233 contribute to the NADP(+) site; that span reads GRG.

It belongs to the tetrahydrofolate dehydrogenase/cyclohydrolase family. Homodimer.

It carries out the reaction (6R)-5,10-methylene-5,6,7,8-tetrahydrofolate + NADP(+) = (6R)-5,10-methenyltetrahydrofolate + NADPH. It catalyses the reaction (6R)-5,10-methenyltetrahydrofolate + H2O = (6R)-10-formyltetrahydrofolate + H(+). It functions in the pathway one-carbon metabolism; tetrahydrofolate interconversion. Its function is as follows. Catalyzes the oxidation of 5,10-methylenetetrahydrofolate to 5,10-methenyltetrahydrofolate and then the hydrolysis of 5,10-methenyltetrahydrofolate to 10-formyltetrahydrofolate. The sequence is that of Bifunctional protein FolD from Mycobacterium tuberculosis (strain ATCC 25177 / H37Ra).